A 320-amino-acid chain; its full sequence is Lipoyl synthase (320 aa).

Residues 1-29 form a disordered region; the sequence is MVTVVDRVTNRRLRHPEKAHRPDTSVQKK. The segment covering 19–29 has biased composition (basic and acidic residues); sequence AHRPDTSVQKK. 7 residues coordinate [4Fe-4S] cluster: Cys59, Cys64, Cys70, Cys85, Cys89, Cys92, and Ser298. The Radical SAM core domain maps to 71 to 287; that stretch reads WSQRHASFMI…AKIGKVKGFL (217 aa).

The protein belongs to the radical SAM superfamily. Lipoyl synthase family. The cofactor is [4Fe-4S] cluster.

It localises to the cytoplasm. The enzyme catalyses [[Fe-S] cluster scaffold protein carrying a second [4Fe-4S](2+) cluster] + N(6)-octanoyl-L-lysyl-[protein] + 2 oxidized [2Fe-2S]-[ferredoxin] + 2 S-adenosyl-L-methionine + 4 H(+) = [[Fe-S] cluster scaffold protein] + N(6)-[(R)-dihydrolipoyl]-L-lysyl-[protein] + 4 Fe(3+) + 2 hydrogen sulfide + 2 5'-deoxyadenosine + 2 L-methionine + 2 reduced [2Fe-2S]-[ferredoxin]. Its pathway is protein modification; protein lipoylation via endogenous pathway; protein N(6)-(lipoyl)lysine from octanoyl-[acyl-carrier-protein]: step 2/2. Functionally, catalyzes the radical-mediated insertion of two sulfur atoms into the C-6 and C-8 positions of the octanoyl moiety bound to the lipoyl domains of lipoate-dependent enzymes, thereby converting the octanoylated domains into lipoylated derivatives. This is Lipoyl synthase from Bartonella tribocorum (strain CIP 105476 / IBS 506).